We begin with the raw amino-acid sequence, 472 residues long: Ribosomal protein uS12 methylthiotransferase RimO (472 aa).

Residues 33–143 (NRIGFVSLGC…VLKHVHKYVP (111 aa)) form the MTTase N-terminal domain. 6 residues coordinate [4Fe-4S] cluster: Cys42, Cys78, Cys107, Cys175, Cys179, and Cys182. The Radical SAM core domain occupies 161-398 (LTPKHYAYLK…MEVQAEISAE (238 aa)). The TRAM domain occupies 401-467 (ARFVGRTLDI…EHDLWAEVVD (67 aa)).

This sequence belongs to the methylthiotransferase family. RimO subfamily. [4Fe-4S] cluster is required as a cofactor.

The protein localises to the cytoplasm. It carries out the reaction L-aspartate(89)-[ribosomal protein uS12]-hydrogen + (sulfur carrier)-SH + AH2 + 2 S-adenosyl-L-methionine = 3-methylsulfanyl-L-aspartate(89)-[ribosomal protein uS12]-hydrogen + (sulfur carrier)-H + 5'-deoxyadenosine + L-methionine + A + S-adenosyl-L-homocysteine + 2 H(+). Functionally, catalyzes the methylthiolation of an aspartic acid residue of ribosomal protein uS12. The polypeptide is Ribosomal protein uS12 methylthiotransferase RimO (Shewanella baltica (strain OS155 / ATCC BAA-1091)).